A 247-amino-acid chain; its full sequence is Ubiquinone biosynthesis O-methyltransferase (247 aa).

4 residues coordinate S-adenosyl-L-methionine: R39, G70, D91, and M134.

This sequence belongs to the methyltransferase superfamily. UbiG/COQ3 family.

It catalyses the reaction a 3-demethylubiquinol + S-adenosyl-L-methionine = a ubiquinol + S-adenosyl-L-homocysteine + H(+). The enzyme catalyses a 3-(all-trans-polyprenyl)benzene-1,2-diol + S-adenosyl-L-methionine = a 2-methoxy-6-(all-trans-polyprenyl)phenol + S-adenosyl-L-homocysteine + H(+). It participates in cofactor biosynthesis; ubiquinone biosynthesis. Functionally, O-methyltransferase that catalyzes the 2 O-methylation steps in the ubiquinone biosynthetic pathway. The polypeptide is Ubiquinone biosynthesis O-methyltransferase (Cereibacter sphaeroides (strain ATCC 17023 / DSM 158 / JCM 6121 / CCUG 31486 / LMG 2827 / NBRC 12203 / NCIMB 8253 / ATH 2.4.1.) (Rhodobacter sphaeroides)).